We begin with the raw amino-acid sequence, 1311 residues long: Suppressor of presenilin protein 4 (1311 aa).

The span at 1 to 11 (MSSEPTSSIES) shows a compositional bias: polar residues. Disordered regions lie at residues 1-58 (MSSE…DDLN) and 75-95 (MFED…STAH). 2 C2H2-type zinc fingers span residues 112–134 (HACH…TKMH) and 141–163 (FACE…NNIH). The tract at residues 226 to 304 (EFDTTPPPIL…PPPVRKDVEK (79 aa)) is disordered. Residues 280–293 (SPKGSLPSSSASSV) show a composition bias toward low complexity. C2H2-type zinc fingers lie at residues 327-349 (QRCP…SGGH), 355-379 (YICP…YILH), 451-476 (KKCN…VKTH), and 487-510 (FLCL…LIEH). A disordered region spans residues 544-563 (VKEEPKEADGDESGDESFDS). Acidic residues predominate over residues 552-561 (DGDESGDESF). C2H2-type zinc fingers lie at residues 585–607 (FCCN…YDKH), 613–635 (FKCQ…EKLH), 709–731 (FQCT…KKRH), 737–759 (YRCV…LKQH), 794–816 (YCCD…HRNH), and 823–845 (NICS…TIIH). The interval 865 to 1002 (RPVSSLTDLN…ESPEPDESVE (138 aa)) is disordered. Positions 874–897 (NSEKMNERKSTKRKMLDKVEKMEV) are enriched in basic and acidic residues. Acidic residues predominate over residues 898 to 907 (GEDEEDDEES). Residues 908–920 (VDKGTDDGDYKQR) are compositionally biased toward basic and acidic residues. Residues 956-979 (NRINYSLLSKNGSGKPTPSTSSAN) show a composition bias toward polar residues. C2H2-type zinc fingers lie at residues 1022-1044 (LKCP…RYYH), 1053-1075 (YACS…LKLH), 1104-1126 (YYCK…SAYH), 1162-1184 (KYCK…LDRH), 1190-1212 (YKCY…QLNH), and 1261-1284 (LKCP…SVHH).

As to expression, expressed in neurons.

It localises to the nucleus. Probable transcriptional regulator, which participates in the transcriptional repression of the presenilin protein hop-1. Might play a role in the oxidative stress response. The sequence is that of Suppressor of presenilin protein 4 (spr-4) from Caenorhabditis elegans.